The sequence spans 486 residues: Nuclear distribution protein PAC1 (486 aa).

A coiled-coil region spans residues 66 to 99 (STVLRLQKKIIDLENEISNLNNIINSTNSDNNGI). WD repeat units lie at residues 119 to 158 (QCEN…NTIP), 164 to 205 (AHTR…RTLN), 206 to 246 (GHEH…SLKS), 249 to 291 (GHSE…GVAM), 294 to 328 (GHSH…FPTI), 329 to 368 (PLEL…IAPH), 389 to 428 (GHSS…ETGY), and 437 to 483 (GHDG…NSIK).

It belongs to the WD repeat LIS1/nudF family. As to quaternary structure, self-associates. Interacts with NDL1 and dynein.

Its subcellular location is the cytoplasm. The protein resides in the cytoskeleton. It is found in the spindle pole. Positively regulates the activity of the minus-end directed microtubule motor protein dynein. Plays a central role in positioning the mitotic spindle at the bud neck during cell division. Targets cytoplasmic dynein to microtubule plus ends, thereby promoting dynein-mediated microtubule sliding along the bud cortex and consequently the movement of the mitotic spindle to the bud neck. This is Nuclear distribution protein PAC1 from Candida albicans (strain SC5314 / ATCC MYA-2876) (Yeast).